A 386-amino-acid chain; its full sequence is Lipoyl synthase, mitochondrial (386 aa).

C110, C115, C121, C141, C145, C148, and S356 together coordinate [4Fe-4S] cluster. A Radical SAM core domain is found at 124 to 345 (GNDKSKATAT…KEQALEMGFL (222 aa)).

This sequence belongs to the radical SAM superfamily. Lipoyl synthase family. It depends on [4Fe-4S] cluster as a cofactor.

The protein resides in the mitochondrion. The enzyme catalyses [[Fe-S] cluster scaffold protein carrying a second [4Fe-4S](2+) cluster] + N(6)-octanoyl-L-lysyl-[protein] + 2 oxidized [2Fe-2S]-[ferredoxin] + 2 S-adenosyl-L-methionine + 4 H(+) = [[Fe-S] cluster scaffold protein] + N(6)-[(R)-dihydrolipoyl]-L-lysyl-[protein] + 4 Fe(3+) + 2 hydrogen sulfide + 2 5'-deoxyadenosine + 2 L-methionine + 2 reduced [2Fe-2S]-[ferredoxin]. The protein operates within protein modification; protein lipoylation via endogenous pathway; protein N(6)-(lipoyl)lysine from octanoyl-[acyl-carrier-protein]: step 2/2. In terms of biological role, catalyzes the radical-mediated insertion of two sulfur atoms into the C-6 and C-8 positions of the octanoyl moiety bound to the lipoyl domains of lipoate-dependent enzymes, thereby converting the octanoylated domains into lipoylated derivatives. This is Lipoyl synthase, mitochondrial from Zygosaccharomyces rouxii (strain ATCC 2623 / CBS 732 / NBRC 1130 / NCYC 568 / NRRL Y-229).